Reading from the N-terminus, the 122-residue chain is Large ribosomal subunit protein uL14 (122 aa).

The protein belongs to the universal ribosomal protein uL14 family. As to quaternary structure, part of the 50S ribosomal subunit. Forms a cluster with proteins L3 and L19. In the 70S ribosome, L14 and L19 interact and together make contacts with the 16S rRNA in bridges B5 and B8.

In terms of biological role, binds to 23S rRNA. Forms part of two intersubunit bridges in the 70S ribosome. In Azoarcus sp. (strain BH72), this protein is Large ribosomal subunit protein uL14.